The following is a 391-amino-acid chain: UPF0328 protein ECU06_1650 (391 aa).

Belongs to the UPF0328 family.

The sequence is that of UPF0328 protein ECU06_1650 from Encephalitozoon cuniculi (strain GB-M1) (Microsporidian parasite).